The chain runs to 378 residues: 1-acyl-sn-glycerol-3-phosphate acyltransferase delta (378 aa).

A helical membrane pass occupies residues 11-31 (FLCHLVFCYVFIASGLIINTI). An HXXXXD motif motif is present at residues 96-101 (HKFEID). The next 3 membrane-spanning stretches (helical) occupy residues 125-145 (ELAYVPIIGWMWYFTEMVFCS), 307-327 (TLVNWLFWASLVLYPFFQFLV), and 338-358 (LASFILVFFVASVGVRWMIGV).

The protein belongs to the 1-acyl-sn-glycerol-3-phosphate acyltransferase family. As to expression, widely expressed with highest levels in skeletal muscle, followed by heart, liver, prostate and thymus.

The protein localises to the endoplasmic reticulum membrane. The enzyme catalyses a 1-acyl-sn-glycero-3-phosphate + an acyl-CoA = a 1,2-diacyl-sn-glycero-3-phosphate + CoA. It catalyses the reaction (4Z,7Z,10Z,13Z,16Z,19Z)-docosahexaenoyl-CoA + 1-hexadecanoyl-sn-glycero-3-phosphate = 1-hexadecanoyl-2-(4Z,7Z,10Z,13Z,16Z,19Z-docosahexaenoyl)-sn-glycero-3-phosphate + CoA. It carries out the reaction 1-octadecanoyl-sn-glycero-3-phosphate + (9Z,12Z)-octadecadienoyl-CoA = 1-octadecanoyl-2-(9Z,12Z-octadecadienoyl)-sn-glycero-3-phosphate + CoA. The catalysed reaction is 1-octadecanoyl-sn-glycero-3-phosphate + (4Z,7Z,10Z,13Z,16Z,19Z)-docosahexaenoyl-CoA = 1-octadecanoyl-2-(4Z,7Z,10Z,13Z,16Z,19Z-docosahexaenoyl)-sn-glycero-3-phosphate + CoA. The enzyme catalyses (4Z,7Z,10Z,13Z,16Z,19Z)-docosahexaenoyl-CoA + 1-(9Z-octadecenoyl)-sn-glycero-3-phosphate = 1-(9Z-octadecenoyl)-2-(4Z,7Z,10Z,13Z,16Z,19Z-docosahexaenoyl)-sn-glycero-3-phosphate + CoA. The protein operates within phospholipid metabolism; CDP-diacylglycerol biosynthesis; CDP-diacylglycerol from sn-glycerol 3-phosphate: step 2/3. In terms of biological role, converts 1-acyl-sn-glycerol-3-phosphate (lysophosphatidic acid or LPA) into 1,2-diacyl-sn-glycerol-3-phosphate (phosphatidic acid or PA) by incorporating an acyl moiety at the sn-2 position of the glycerol backbone. Exhibits high acyl-CoA specificity for polyunsaturated fatty acyl-CoA, especially docosahexaenoyl-CoA (22:6-CoA, DHA-CoA). This is 1-acyl-sn-glycerol-3-phosphate acyltransferase delta (AGPAT4) from Homo sapiens (Human).